We begin with the raw amino-acid sequence, 124 residues long: Small ribosomal subunit protein uS12c (124 aa).

Disordered regions lie at residues 1–28 (MPTIQQLVRSERHKSSKKTKSPALKGCP) and 104–124 (ASGVKDRKKSRSKYGAKQPKT). 2 stretches are compositionally biased toward basic residues: residues 11–20 (ERHKSSKKTK) and 109–124 (DRKKSRSKYGAKQPKT).

This sequence belongs to the universal ribosomal protein uS12 family. Part of the 30S ribosomal subunit.

It localises to the plastid. Its subcellular location is the chloroplast. In terms of biological role, with S4 and S5 plays an important role in translational accuracy. Located at the interface of the 30S and 50S subunits. The sequence is that of Small ribosomal subunit protein uS12c (rps12) from Gracilaria tenuistipitata var. liui (Red alga).